The chain runs to 42 residues: Photosystem I reaction center subunit IX (42 aa).

The helical transmembrane segment at 7-27 (YLSIAPVLATLWFGFLVGSLI) threads the bilayer.

Belongs to the PsaJ family.

Its subcellular location is the plastid membrane. Functionally, may help in the organization of the PsaE and PsaF subunits. The sequence is that of Photosystem I reaction center subunit IX from Aneura mirabilis (Parasitic liverwort).